Here is a 365-residue protein sequence, read N- to C-terminus: Protein-glutamate methylesterase/protein-glutamine glutaminase 1 (365 aa).

The Response regulatory domain maps to 4–121 (KVLVVDDSQF…SRDSVVLKKR (118 aa)). Aspartate 55 carries the 4-aspartylphosphate modification. The interval 138 to 173 (AARSTTQPSGVRPSALGANLSSSRSPRPASSAPSAP) is disordered. A compositionally biased stretch (low complexity) spans 158–172 (SSSRSPRPASSAPSA). The CheB-type methylesterase domain occupies 182 to 365 (KLVAIGASTG…QVWQRLVSDV (184 aa)). Catalysis depends on residues serine 189, histidine 216, and aspartate 310.

Belongs to the CheB family. In terms of processing, phosphorylated by CheA. Phosphorylation of the N-terminal regulatory domain activates the methylesterase activity.

Its subcellular location is the cytoplasm. The catalysed reaction is [protein]-L-glutamate 5-O-methyl ester + H2O = L-glutamyl-[protein] + methanol + H(+). It catalyses the reaction L-glutaminyl-[protein] + H2O = L-glutamyl-[protein] + NH4(+). Involved in chemotaxis. Part of a chemotaxis signal transduction system that modulates chemotaxis in response to various stimuli. Catalyzes the demethylation of specific methylglutamate residues introduced into the chemoreceptors (methyl-accepting chemotaxis proteins or MCP) by CheR. Also mediates the irreversible deamidation of specific glutamine residues to glutamic acid. This chain is Protein-glutamate methylesterase/protein-glutamine glutaminase 1, found in Saccharophagus degradans (strain 2-40 / ATCC 43961 / DSM 17024).